Here is a 276-residue protein sequence, read N- to C-terminus: NH(3)-dependent NAD(+) synthetase (276 aa).

Gly43–Ser50 is a binding site for ATP. Asp49 contacts Mg(2+). Arg146 serves as a coordination point for deamido-NAD(+). Thr166 contributes to the ATP binding site. Glu171 is a binding site for Mg(2+). 2 residues coordinate deamido-NAD(+): Lys179 and Asp186. ATP contacts are provided by Lys195 and Thr217. His266–Lys267 serves as a coordination point for deamido-NAD(+).

This sequence belongs to the NAD synthetase family. Homodimer.

The enzyme catalyses deamido-NAD(+) + NH4(+) + ATP = AMP + diphosphate + NAD(+) + H(+). The protein operates within cofactor biosynthesis; NAD(+) biosynthesis; NAD(+) from deamido-NAD(+) (ammonia route): step 1/1. Functionally, catalyzes the ATP-dependent amidation of deamido-NAD to form NAD. Uses ammonia as a nitrogen source. This Vibrio vulnificus (strain CMCP6) protein is NH(3)-dependent NAD(+) synthetase.